A 120-amino-acid chain; its full sequence is NAD(P)H-quinone oxidoreductase subunit 3, chloroplastic (120 aa).

3 helical membrane-spanning segments follow: residues 9-29, 64-84, and 88-108; these read IFWA…LISG, MFAL…PWAM, and VLGV…ILGL.

The protein belongs to the complex I subunit 3 family. NDH is composed of at least 16 different subunits, 5 of which are encoded in the nucleus.

It localises to the plastid. The protein resides in the chloroplast thylakoid membrane. The catalysed reaction is a plastoquinone + NADH + (n+1) H(+)(in) = a plastoquinol + NAD(+) + n H(+)(out). It catalyses the reaction a plastoquinone + NADPH + (n+1) H(+)(in) = a plastoquinol + NADP(+) + n H(+)(out). In terms of biological role, NDH shuttles electrons from NAD(P)H:plastoquinone, via FMN and iron-sulfur (Fe-S) centers, to quinones in the photosynthetic chain and possibly in a chloroplast respiratory chain. The immediate electron acceptor for the enzyme in this species is believed to be plastoquinone. Couples the redox reaction to proton translocation, and thus conserves the redox energy in a proton gradient. In Aethionema cordifolium (Lebanon stonecress), this protein is NAD(P)H-quinone oxidoreductase subunit 3, chloroplastic.